Consider the following 356-residue polypeptide: Phosphoribosylformylglycinamidine cyclo-ligase (356 aa).

The protein belongs to the AIR synthase family.

The protein localises to the cytoplasm. The catalysed reaction is 2-formamido-N(1)-(5-O-phospho-beta-D-ribosyl)acetamidine + ATP = 5-amino-1-(5-phospho-beta-D-ribosyl)imidazole + ADP + phosphate + H(+). It functions in the pathway purine metabolism; IMP biosynthesis via de novo pathway; 5-amino-1-(5-phospho-D-ribosyl)imidazole from N(2)-formyl-N(1)-(5-phospho-D-ribosyl)glycinamide: step 2/2. The polypeptide is Phosphoribosylformylglycinamidine cyclo-ligase (Sinorhizobium medicae (strain WSM419) (Ensifer medicae)).